The sequence spans 520 residues: Glucose-6-phosphate isomerase (520 aa).

Glu-327 serves as the catalytic Proton donor. Residues His-358 and Lys-486 contribute to the active site.

The protein belongs to the GPI family.

It localises to the cytoplasm. It carries out the reaction alpha-D-glucose 6-phosphate = beta-D-fructose 6-phosphate. It participates in carbohydrate biosynthesis; gluconeogenesis. It functions in the pathway carbohydrate degradation; glycolysis; D-glyceraldehyde 3-phosphate and glycerone phosphate from D-glucose: step 2/4. Catalyzes the reversible isomerization of glucose-6-phosphate to fructose-6-phosphate. In Bordetella avium (strain 197N), this protein is Glucose-6-phosphate isomerase.